A 290-amino-acid polypeptide reads, in one-letter code: Nucleotide-binding protein FN1089 (290 aa).

Residue 11 to 18 participates in ATP binding; the sequence is GLSGAGKT. 56-59 is a binding site for GTP; the sequence is DIRT.

It belongs to the RapZ-like family.

Displays ATPase and GTPase activities. The sequence is that of Nucleotide-binding protein FN1089 from Fusobacterium nucleatum subsp. nucleatum (strain ATCC 25586 / DSM 15643 / BCRC 10681 / CIP 101130 / JCM 8532 / KCTC 2640 / LMG 13131 / VPI 4355).